The following is a 436-amino-acid chain: 3-ketoacyl-CoA thiolase (436 aa).

Cys99 serves as the catalytic Acyl-thioester intermediate. Active-site proton acceptor residues include His392 and Cys422.

Belongs to the thiolase-like superfamily. Thiolase family. In terms of assembly, heterotetramer of two alpha chains (FadJ) and two beta chains (FadI).

It localises to the cytoplasm. The catalysed reaction is an acyl-CoA + acetyl-CoA = a 3-oxoacyl-CoA + CoA. It functions in the pathway lipid metabolism; fatty acid beta-oxidation. Functionally, catalyzes the final step of fatty acid oxidation in which acetyl-CoA is released and the CoA ester of a fatty acid two carbons shorter is formed. The chain is 3-ketoacyl-CoA thiolase from Escherichia coli O6:H1 (strain CFT073 / ATCC 700928 / UPEC).